Reading from the N-terminus, the 144-residue chain is Ribosomal RNA large subunit methyltransferase H (144 aa).

S-adenosyl-L-methionine is bound by residues Gly92 and 111 to 116 (LSPMTF).

Belongs to the RNA methyltransferase RlmH family. Homodimer.

It localises to the cytoplasm. The catalysed reaction is pseudouridine(1915) in 23S rRNA + S-adenosyl-L-methionine = N(3)-methylpseudouridine(1915) in 23S rRNA + S-adenosyl-L-homocysteine + H(+). Its function is as follows. Specifically methylates the pseudouridine at position 1915 (m3Psi1915) in 23S rRNA. This is Ribosomal RNA large subunit methyltransferase H from Synechococcus sp. (strain CC9311).